The primary structure comprises 457 residues: Exodeoxyribonuclease 7 large subunit (457 aa).

It belongs to the XseA family. In terms of assembly, heterooligomer composed of large and small subunits.

Its subcellular location is the cytoplasm. The catalysed reaction is Exonucleolytic cleavage in either 5'- to 3'- or 3'- to 5'-direction to yield nucleoside 5'-phosphates.. In terms of biological role, bidirectionally degrades single-stranded DNA into large acid-insoluble oligonucleotides, which are then degraded further into small acid-soluble oligonucleotides. The chain is Exodeoxyribonuclease 7 large subunit from Enterobacter sp. (strain 638).